The sequence spans 176 residues: Nucleoside triphosphate/diphosphate phosphatase (176 aa).

Catalysis depends on Arg-23, which acts as the Proton donor. Mg(2+)-binding residues include Asn-87, Asp-103, Asp-105, Asp-107, Asp-120, and Glu-123.

Belongs to the Ntdp family. Mg(2+) is required as a cofactor.

The catalysed reaction is a ribonucleoside 5'-triphosphate + H2O = a ribonucleoside 5'-diphosphate + phosphate + H(+). It carries out the reaction a ribonucleoside 5'-diphosphate + H2O = a ribonucleoside 5'-phosphate + phosphate + H(+). Has nucleoside phosphatase activity towards nucleoside triphosphates and nucleoside diphosphates. The protein is Nucleoside triphosphate/diphosphate phosphatase of Bacillus licheniformis (strain ATCC 14580 / DSM 13 / JCM 2505 / CCUG 7422 / NBRC 12200 / NCIMB 9375 / NCTC 10341 / NRRL NRS-1264 / Gibson 46).